The following is a 447-amino-acid chain: MLKKQTAGLVLWGAIIFVGWNALLLLFFWTRPAPGRLPSDSALGDDPASLTREVIHLAEDAEAELERQRGLLQQIKEHYALWRQRWRVPTVAPPAWPRVPVTPSPVQIPILVIACDRSTVRRCLDKLLHYRPSAERFPIIVSQDCGHEETAQVIASYGTAVTHIRQPDLSNIAVQPDHRKFQGYYKIARHYRWALGQIFNKFKFPAAVVVEDDLEVAPDFFEYFQATYPLLRTDPSLWCVSAWNDNGKEQMVDSSKPELLYRTDFFPGLGWLLLADLWAELEPKWPKAFWDDWMRRPEQRKGRACIRPEISRTMTFGRKGVSHGQFFDQHLKFIKLNQQFVPFTQLDLSYLQQEAYDRDFLAQVYGAPQLQVEKVRTNDQKELGEVRVQYTSRDSFKAFAKALGVMDDLKSGVPRAGYRGIVTFQFRGRRVHLAPPQTWTGYDPSWN.

Residues 1–6 lie on the Cytoplasmic side of the membrane; that stretch reads MLKKQT. A helical; Signal-anchor for type II membrane protein membrane pass occupies residues 7-29; it reads AGLVLWGAIIFVGWNALLLLFFW. At 30–447 the chain is on the lumenal side; sequence TRPAPGRLPS…TWTGYDPSWN (418 aa). A disulfide bridge connects residues Cys115 and Cys145. The substrate site is built by Arg117, Asp144, His190, and Asp212. Asp213 serves as a coordination point for Mn(2+). A disulfide bridge links Cys239 with Cys305. The Proton acceptor role is filled by Asp291. Ser322 serves as a coordination point for substrate.

It belongs to the glycosyltransferase 13 family. Interacts with MGAT4D. Interacts with BRI3. Requires Mn(2+) as cofactor. In terms of tissue distribution, detected in kidney, liver and brain.

It localises to the golgi apparatus membrane. Its subcellular location is the cytoplasm. The protein resides in the perinuclear region. It catalyses the reaction N(4)-(alpha-D-Man-(1-&gt;3)-[alpha-D-Man-(1-&gt;3)-[alpha-D-Man-(1-&gt;6)]-alpha-D-Man-(1-&gt;6)]-beta-D-Man-(1-&gt;4)-beta-D-GlcNAc-(1-&gt;4)-beta-D-GlcNAc)-L-asparaginyl-[protein] (N-glucan mannose isomer 5A1,2) + UDP-N-acetyl-alpha-D-glucosamine = N(4)-{beta-D-GlcNAc-(1-&gt;2)-alpha-D-Man-(1-&gt;3)-[alpha-D-Man-(1-&gt;3)-[alpha-D-Man-(1-&gt;6)]-alpha-D-Man-(1-&gt;6)]-beta-D-Man-(1-&gt;4)-beta-D-GlcNAc-(1-&gt;4)-beta-D-GlcNAc}-L-asparaginyl-[protein] + UDP + H(+). It participates in protein modification; protein glycosylation. Initiates complex N-linked carbohydrate formation. Essential for the conversion of high-mannose to hybrid and complex N-glycans. The chain is Alpha-1,3-mannosyl-glycoprotein 2-beta-N-acetylglucosaminyltransferase (Mgat1) from Mus musculus (Mouse).